A 295-amino-acid chain; its full sequence is Probable lipid kinase YegS-like (295 aa).

A DAGKc domain is found at 1 to 129 (MQGRKAMLVL…IDLGQAGDQL (129 aa)). Residues Thr-39, 65 to 71 (GDGTLRD), and Thr-92 contribute to the ATP site. Mg(2+)-binding residues include Met-210, Asp-213, and Leu-215. Glu-264 functions as the Proton acceptor in the catalytic mechanism.

The protein belongs to the diacylglycerol/lipid kinase family. YegS lipid kinase subfamily. Requires Mg(2+) as cofactor. Ca(2+) serves as cofactor.

It is found in the cytoplasm. Functionally, probably phosphorylates lipids; the in vivo substrate is unknown. The sequence is that of Probable lipid kinase YegS-like from Pseudomonas putida (strain ATCC 47054 / DSM 6125 / CFBP 8728 / NCIMB 11950 / KT2440).